The primary structure comprises 25 residues: Germin-like protein (25 aa).

This sequence belongs to the germin family.

The sequence is that of Germin-like protein from Populus euphratica (Euphrates poplar).